A 391-amino-acid chain; its full sequence is Choline/ethanolaminephosphotransferase 1 (391 aa).

Residues 1–49 (MGYFVPDSHIENLKSYKYQSEDRSLVSKYFLKPFWQRFCHIFPTWMAPN) are Lumenal-facing. The helical transmembrane segment at 50–69 (IITLSGFAFIVINVLTVFYY) threads the bilayer. The Cytoplasmic portion of the chain corresponds to 70 to 172 (DPNLNTDTPR…YHTHTLYLSE (103 aa)). A helical membrane pass occupies residues 173-193 (FSGPVEGILIVCVSLILTGIY). Residues 194–211 (GKQVIWHTYLFTITVGDK) are Lumenal-facing. Residues 212–232 (VIDVDTLDIVFSLAVFGLVMN) form a helical membrane-spanning segment. Residues 233–264 (ALSAKRNVDKYYRNSTSSANNITQIEQDSAIK) are Cytoplasmic-facing. The helical transmembrane segment at 265–282 (GLLPFFAYYASIALLVWM) threads the bilayer. The Lumenal segment spans residues 283–285 (QPS). The helical transmembrane segment at 286-308 (FITLSFILSVGFTGAFTVGRIIV) threads the bilayer. The Cytoplasmic portion of the chain corresponds to 309-321 (CHLTKQSFPMFNA). Residues 322–342 (PMLIPLCQIVLYKICLSLWGI) traverse the membrane as a helical segment. Topologically, residues 343 to 346 (ESNK) are lumenal. The helical transmembrane segment at 347–367 (IVFALSWLGFGLSLGVHIMFM) threads the bilayer. The Cytoplasmic segment spans residues 368–391 (NDIIHEFTEYLDVYALSIKRSKLT).

The protein belongs to the CDP-alcohol phosphatidyltransferase class-I family. Requires Mg(2+) as cofactor.

Its subcellular location is the golgi apparatus membrane. The enzyme catalyses CDP-ethanolamine + a 1,2-diacyl-sn-glycerol = a 1,2-diacyl-sn-glycero-3-phosphoethanolamine + CMP + H(+). The catalysed reaction is CDP-choline + a 1,2-diacyl-sn-glycerol = a 1,2-diacyl-sn-glycero-3-phosphocholine + CMP + H(+). It carries out the reaction CDP-N-methylethanolamine + a 1,2-diacyl-sn-glycerol = a 1,2-diacyl-sn-glycero-3-phospho-N-methylethanolamine + CMP + H(+). It catalyses the reaction CDP-N,N-dimethylethanolamine + a 1,2-diacyl-sn-glycerol = a 1,2-diacyl-sn-glycero-3-phospho-N,N-dimethylethanolamine + CMP + H(+). The enzyme catalyses 1,2-di-(9Z-octadecenoyl)-glycerol + CDP-choline = 1,2-di-(9Z-octadecenoyl)-sn-glycero-3-phosphocholine + CMP + H(+). The catalysed reaction is 1,2-di-(9Z-octadecenoyl)-glycerol + CDP-ethanolamine = 1,2-di-(9Z-octadecenoyl)-sn-glycero-3-phosphoethanolamine + CMP + H(+). The protein operates within phospholipid metabolism; phosphatidylethanolamine biosynthesis; phosphatidylethanolamine from ethanolamine: step 3/3. It functions in the pathway phospholipid metabolism; phosphatidylcholine biosynthesis; phosphatidylcholine from phosphocholine: step 2/2. With respect to regulation, requires a divalent cation activator, and is inhibited by CMP. Activated by phospholipids, especially phosphatidylcholine. Functionally, catalyzes the final step in the CDP-ethanolamine route leading to phosphatidylethanolamine (PE). Can also catalyze the formation of phosphatidylcholine (PC) from CDP-choline, but does not substantially contribute to PC biosynthesis. Preferentially uses CDP-dimethylethanolamine and CDP-propanolamine as aminoalcohol substrates. Shows highest activity toward di-unsaturated diacylglycerol species as lipid substrates. The CDP-ethanolamine pathway may play a role in maintaining the proper PE species distribution. This chain is Choline/ethanolaminephosphotransferase 1 (EPT1), found in Saccharomyces cerevisiae (strain ATCC 204508 / S288c) (Baker's yeast).